A 629-amino-acid polypeptide reads, in one-letter code: UvrABC system protein C (629 aa).

One can recognise a GIY-YIG domain in the interval 12 to 91; sequence DRPGCYLFKD…IKKHKPKYNI (80 aa). Residues 200–235 enclose the UVR domain; that stretch reads QEVLERLRARMEQAAERLEFERAAELRDQIRAIEKV.

It belongs to the UvrC family. In terms of assembly, interacts with UvrB in an incision complex.

The protein resides in the cytoplasm. The UvrABC repair system catalyzes the recognition and processing of DNA lesions. UvrC both incises the 5' and 3' sides of the lesion. The N-terminal half is responsible for the 3' incision and the C-terminal half is responsible for the 5' incision. The protein is UvrABC system protein C of Symbiobacterium thermophilum (strain DSM 24528 / JCM 14929 / IAM 14863 / T).